The chain runs to 405 residues: Elongation factor Tu (405 aa).

A tr-type G domain is found at 10–215; it reads KPHVNVGTIG…AIDAYIPTPE (206 aa). The segment at 19 to 26 is G1; sequence GHVDHGKT. 19–26 serves as a coordination point for GTP; it reads GHVDHGKT. T26 is a binding site for Mg(2+). The tract at residues 61-65 is G2; it reads GITIN. The G3 stretch occupies residues 82 to 85; the sequence is DCPG. Residues 82–86 and 137–140 contribute to the GTP site; these read DCPGH and NKVD. The segment at 137-140 is G4; that stretch reads NKVD. Residues 175 to 177 are G5; it reads SAL.

It belongs to the TRAFAC class translation factor GTPase superfamily. Classic translation factor GTPase family. EF-Tu/EF-1A subfamily. In terms of assembly, monomer.

It localises to the cytoplasm. The enzyme catalyses GTP + H2O = GDP + phosphate + H(+). Functionally, GTP hydrolase that promotes the GTP-dependent binding of aminoacyl-tRNA to the A-site of ribosomes during protein biosynthesis. The protein is Elongation factor Tu of Deinococcus geothermalis (strain DSM 11300 / CIP 105573 / AG-3a).